A 120-amino-acid polypeptide reads, in one-letter code: UPF0231 protein YacL (120 aa).

This sequence belongs to the UPF0231 family.

This Shigella flexneri protein is UPF0231 protein YacL (yacL).